The following is a 349-amino-acid chain: Phosphate acyltransferase (349 aa).

The protein belongs to the PlsX family. Homodimer. Probably interacts with PlsY.

The protein resides in the cytoplasm. It carries out the reaction a fatty acyl-[ACP] + phosphate = an acyl phosphate + holo-[ACP]. The protein operates within lipid metabolism; phospholipid metabolism. In terms of biological role, catalyzes the reversible formation of acyl-phosphate (acyl-PO(4)) from acyl-[acyl-carrier-protein] (acyl-ACP). This enzyme utilizes acyl-ACP as fatty acyl donor, but not acyl-CoA. The chain is Phosphate acyltransferase from Colwellia psychrerythraea (strain 34H / ATCC BAA-681) (Vibrio psychroerythus).